A 22-amino-acid chain; its full sequence is Mu-conotoxin CnIIIC (22 aa).

Gln1 bears the Pyrrolidone carboxylic acid; partial mark. 3 cysteine pairs are disulfide-bonded: Cys3–Cys15, Cys4–Cys21, and Cys10–Cys22. At Cys22 the chain carries Cysteine amide.

Belongs to the conotoxin M superfamily. Expressed by the venom duct.

The protein resides in the secreted. In terms of biological role, mu-conotoxins block voltage-gated sodium channels (Nav). This synthetic toxin blocks both voltage-gated sodium channels and nicotinic acetylcholine receptor (nAChR). Inhibits the skeletal muscle rNav1.4/SCN4A (IC(50)=1.3 nM) and the brain rNav1.2/SCN2A in a long-lasting manner. A low inhibition is also observed on neuronal mNav1.6/SCN8A and mNav1.7/SCN9A. Modestly blocks nAChR alpha-3/beta-2 subtype (IC(50)=450 nM) (partially reversible) and, to a lesser extent, alpha-7 and alpha-4/beta-2 subtypes (reversible). In vitro, decreases twitch tension in mouse hemidiaphragms (IC(50)=150 nM), and displays a high blocking effect in mouse extensor digitorum longus muscles (IC(50)=46 nM). The protein is Mu-conotoxin CnIIIC of Conus consors (Singed cone).